Here is a 25-residue protein sequence, read N- to C-terminus: uncharacterized protein (25 aa).

The protein resides in the plastid. Its subcellular location is the chloroplast. This is an uncharacterized protein from Trieres chinensis (Marine centric diatom).